The chain runs to 416 residues: Acyl-coenzyme A amino acid N-acyltransferase 1 (416 aa).

At Ser125 the chain carries Phosphoserine. Residues Ser235, Asp325, and His359 each act as charge relay system in the active site. Ser414 is subject to Phosphoserine. The Microbody targeting signal motif lies at 414–416 (SKL).

The protein belongs to the C/M/P thioester hydrolase family. In terms of tissue distribution, expressed mainly in liver and kidney with low levels in adrenal and little or no expression in other tissues.

Its subcellular location is the peroxisome. It carries out the reaction tetracosanoyl-CoA + taurine = N-tetracosanoyl-taurine + CoA + H(+). The catalysed reaction is eicosanoyl-CoA + taurine = N-eicosanoyl-taurine + CoA + H(+). The enzyme catalyses taurine + octadecanoyl-CoA = N-octadecanoyl-taurine + CoA + H(+). It catalyses the reaction taurine + hexadecanoyl-CoA = N-hexadecanoyl-taurine + CoA + H(+). It carries out the reaction tetradecanoyl-CoA + taurine = N-tetradecanoyl-taurine + CoA + H(+). The catalysed reaction is dodecanoyl-CoA + taurine = N-dodecanoyl-taurine + CoA + H(+). Functionally, acyltransferase which efficiently conjugates very long-chain and long-chain fatty acids to taurine. Shows no conjugation activity in the presence of glycine. The protein is Acyl-coenzyme A amino acid N-acyltransferase 1 of Mus musculus (Mouse).